Reading from the N-terminus, the 198-residue chain is Probable GTP-binding protein EngB (198 aa).

Residues 36–198 form the EngB-type G domain; sequence SEPQFAFIGR…NLSKLQELLE (163 aa). Residues 44 to 51, 70 to 74, 88 to 91, 155 to 158, and 182 to 184 each bind GTP; these read GRSNVGKS, GRTQL, DLPG, NKID, and ISA. The Mg(2+) site is built by serine 51 and threonine 72.

Belongs to the TRAFAC class TrmE-Era-EngA-EngB-Septin-like GTPase superfamily. EngB GTPase family. The cofactor is Mg(2+).

In terms of biological role, necessary for normal cell division and for the maintenance of normal septation. The chain is Probable GTP-binding protein EngB from Mesomycoplasma hyopneumoniae (strain 232) (Mycoplasma hyopneumoniae).